The sequence spans 465 residues: uncharacterized protein (465 aa).

11 consecutive transmembrane segments (helical) span residues 19-39 (VLGP…GEYM), 50-70 (MIAG…VAMI), 91-111 (IVGP…YTML), 140-160 (FIVL…LATL), 164-184 (LVIT…VQFG), 201-221 (PYGW…YLGI), 244-264 (AGIM…SGLM), 288-308 (LMVL…NGCI), 342-362 (IVFL…DQVV), 363-383 (TFSI…MVMF), and 403-423 (LPTV…FLGY).

It belongs to the amino acid-polyamine-organocation (APC) superfamily.

The protein localises to the cell membrane. Its function is as follows. Probable amino-acid or metabolite transport protein. This is an uncharacterized protein from Rhizobium meliloti (strain 1021) (Ensifer meliloti).